An 876-amino-acid chain; its full sequence is ATP-dependent helicase Lhr-Core (876 aa).

Residues Gln-37, Lys-60, Thr-61, Asp-175, Glu-176, Arg-374, and His-377 each coordinate ATP. Positions 41 to 232 (IPLIKKGKNV…FLVGGNGDYE (192 aa)) constitute a Helicase ATP-binding domain. The short motif at 175–178 (DEIH) is the DEAH box element. Residues 249 to 421 (PVKDLVHATE…NIHVPENPLD (173 aa)) enclose the Helicase C-terminal domain. The tract at residues 422-506 (VLTQLIVAAS…IFFLNSGTIP (85 aa)) is WH domain. The interval 507 to 876 (DEAMIPVKME…DLEYTEAGIK (370 aa)) is domain 4.

This sequence belongs to the Lhr helicase family. Lhr-Core subfamily. Monomer.

The catalysed reaction is Couples ATP hydrolysis with the unwinding of duplex DNA by translocating in the 3'-5' direction.. It catalyses the reaction ATP + H2O = ADP + phosphate + H(+). Its function is as follows. Probably part of a 4-gene DNA damage response locus in which the upstream ups system, in combination with this downstream locus, functions in homologous recombination to rescue Sulfolobales from DNA-damaging threats. DNA helicase that translocates in a 3'-5' direction on single-stranded (ss)DNA. Binds Holliday junction (HJ) DNA, Y-shaped DNA, DNA with a 3'-overhang and single-stranded (ss)DNA with high affinity; binds double-stranded (ds)DNA with less affinity. Has helicase activity on DNA with a 3'-overhang, Y-shaped DNA and HJ DNA. Does not unwind blunt-ended dsDNA or DNA with a 5'-overhang. In Sulfolobus acidocaldarius (strain ATCC 33909 / DSM 639 / JCM 8929 / NBRC 15157 / NCIMB 11770), this protein is ATP-dependent helicase Lhr-Core.